Here is a 690-residue protein sequence, read N- to C-terminus: Potassium-transporting ATPase ATP-binding subunit (690 aa).

The tract at residues 1-23 (MNSTSTVRQPGGPRQQRRHTPKA) is disordered. 4 helical membrane-spanning segments follow: residues 44-64 (IMVK…TGML), 78-98 (AMFN…ANFA), 233-253 (IALT…VATL), and 268-288 (LLIA…LSAI). The active-site 4-aspartylphosphate intermediate is Asp321. ATP-binding positions include Asp358, Glu362, 389–396 (FSARTRMS), and Lys408. Residues Asp531 and Asp535 each coordinate Mg(2+). 3 helical membrane passes run 601–621 (FAII…IMDL), 627–647 (AVLS…PLAL), and 665–685 (ILVY…LIDL).

It belongs to the cation transport ATPase (P-type) (TC 3.A.3) family. Type IA subfamily. In terms of assembly, the system is composed of three essential subunits: KdpA, KdpB and KdpC.

Its subcellular location is the cell inner membrane. It carries out the reaction K(+)(out) + ATP + H2O = K(+)(in) + ADP + phosphate + H(+). Functionally, part of the high-affinity ATP-driven potassium transport (or Kdp) system, which catalyzes the hydrolysis of ATP coupled with the electrogenic transport of potassium into the cytoplasm. This subunit is responsible for energy coupling to the transport system and for the release of the potassium ions to the cytoplasm. The sequence is that of Potassium-transporting ATPase ATP-binding subunit from Synechocystis sp. (strain ATCC 27184 / PCC 6803 / Kazusa).